Reading from the N-terminus, the 78-residue chain is Putative membrane protein insertion efficiency factor (78 aa).

The protein belongs to the UPF0161 family.

The protein resides in the cell inner membrane. Functionally, could be involved in insertion of integral membrane proteins into the membrane. The chain is Putative membrane protein insertion efficiency factor from Roseobacter denitrificans (strain ATCC 33942 / OCh 114) (Erythrobacter sp. (strain OCh 114)).